Consider the following 313-residue polypeptide: Homoserine O-succinyltransferase (313 aa).

Cysteine 142 functions as the Acyl-thioester intermediate in the catalytic mechanism. Substrate contacts are provided by lysine 163 and serine 192. Residue histidine 235 is the Proton acceptor of the active site. Residue glutamate 237 is part of the active site. Position 249 (arginine 249) interacts with substrate.

The protein belongs to the MetA family.

Its subcellular location is the cytoplasm. The enzyme catalyses L-homoserine + succinyl-CoA = O-succinyl-L-homoserine + CoA. It participates in amino-acid biosynthesis; L-methionine biosynthesis via de novo pathway; O-succinyl-L-homoserine from L-homoserine: step 1/1. Functionally, transfers a succinyl group from succinyl-CoA to L-homoserine, forming succinyl-L-homoserine. The sequence is that of Homoserine O-succinyltransferase from Aliivibrio fischeri (strain MJ11) (Vibrio fischeri).